Consider the following 2339-residue polypeptide: Inverse autotransporter adhesin YeeJ (2339 aa).

Residues 1-26 (MGIKLRRLTAGICLITQLAFPMAAAA) form the signal peptide. Residues 50–98 (VPYTLGALESAQSVAERFGISVAELRKLNQFRTFARGFDNVRQGDELDV) enclose the LysM domain. An inverse autotransporter region spans residues 125-400 (TSQQIGSLLA…SRYDLVDRNN (276 aa)). The segment at 513–605 (QKDSSVSLST…GVDAAKAPAV (93 aa)) is invasin 3 domain. 13 consecutive Big-1 domains span residues 721–815 (IATL…VSFV), 822–913 (QVDL…VNFI), 920–1017 (ALTL…MTFV), 1024–1121 (VVVL…VTFV), 1128–1221 (QVVL…VHFI), 1229–1331 (IIEL…SINV), 1339–1432 (HLTL…VTYV), 1439–1535 (EITL…VNFI), 1542–1639 (QVNL…VTLI), 1646–1730 (KLAS…PTEV), 1746–1837 (ITSL…LEAI), 1840–1934 (KLTL…VKVT), and 1942–2034 (VASF…ITLV). Residues 2236–2339 (KSWWVNAGEA…FAYATCYKNL (104 aa)) form a C-type lectin domain region.

This sequence belongs to the intimin/invasin family.

The protein localises to the cell outer membrane. In terms of biological role, a cryptic inverse autotransporter, it is not expressed in wild-type strain MG1655. Upon overexpression shows increased adherence to polyvinyl chloride (PVC) plates and increased mature biofilm formation. Probably binds peptidoglycan. The polypeptide is Inverse autotransporter adhesin YeeJ (yeeJ) (Escherichia coli (strain K12)).